The chain runs to 817 residues: Myosin-A (817 aa).

Ser19 bears the Phosphoserine mark. The Myosin motor domain maps to 97–771 (MSFGDIGLLN…GAKMLSKIQR (675 aa)). 191 to 198 (GESGAGKT) lines the ATP pocket. The segment at 661-671 (PHFIRCIKPNE) is actin-binding. The tail stretch occupies residues 773–817 (KLVEWENCVSVIEAAIMKYKHKQNVENNVSSLMRVQAHIRKRMVA).

The protein belongs to the TRAFAC class myosin-kinesin ATPase superfamily. Myosin family. As to quaternary structure, interacts with ACT1.

The protein localises to the cell membrane. In terms of biological role, myosins are actin-based motor molecules with ATPase activity. Unconventional myosins serve in intracellular movements. Their highly divergent tails are presumed to bind to membranous compartments, which would be moved relative to actin filaments. This is Myosin-A from Plasmodium yoelii yoelii.